The chain runs to 288 residues: Aquaporin PIP 1-3 (288 aa).

Residues 1 to 30 are disordered; sequence MEGKEEDVRLGANRYTERQPIGTAAQGAEE. The next 2 membrane-spanning stretches (helical) occupy residues 57–77 and 92–114; these read IAEFVATFLFLYISILTVMGV and IAWSFGGMIFALVYCTAGISGGH. Residues 116 to 118 carry the NPA 1 motif; that stretch reads NPA. The next 3 membrane-spanning stretches (helical) occupy residues 135–155, 177–197, and 211–231; these read VFYMAMQCLGAICGAGVVKGF, GDGLGAEIVGTFVLVYTVFSA, and ILAPLPIGFAVFLVHLATIPI. The short motif at 237–239 is the NPA 2 element; sequence NPA. The helical transmembrane segment at 259-279 threads the bilayer; it reads IFWVGPFIGAALAAIYHVVVI.

It belongs to the MIP/aquaporin (TC 1.A.8) family. PIP (TC 1.A.8.11) subfamily. As to expression, expressed in roots and leaves.

It is found in the cell membrane. Functionally, water channel required to facilitate the transport of water across cell membrane. Increases the capacity for root water uptake under water deficit. May play a role in drought avoidance in upland rice. In Oryza sativa subsp. japonica (Rice), this protein is Aquaporin PIP 1-3 (PIP1-3).